We begin with the raw amino-acid sequence, 118 residues long: Holo-[acyl-carrier-protein] synthase (118 aa).

Residues Asp6 and Glu55 each coordinate Mg(2+).

Belongs to the P-Pant transferase superfamily. AcpS family. The cofactor is Mg(2+).

It is found in the cytoplasm. It carries out the reaction apo-[ACP] + CoA = holo-[ACP] + adenosine 3',5'-bisphosphate + H(+). Transfers the 4'-phosphopantetheine moiety from coenzyme A to a Ser of acyl-carrier-protein. The polypeptide is Holo-[acyl-carrier-protein] synthase (Chlorobium chlorochromatii (strain CaD3)).